The sequence spans 679 residues: MAAEGERQNLLSKHLERQVKILQSICKNDSEACNLLDLGYILEKNLFAPADSRKADSGPDPQLNFFPPFLTPECLALHYPFFLTTSIPPSCKGNRSGTDTYSQFCSRSSCLEDIPDPSEWDDSLGNVSLMAELKENQKLAPLEEDSPRTTAVDESKCSSKQSYSYPALTFPPQVQKILFDYLIGESQDPNDLDSEYKLAFTDEDLPQEGQAEKTKQRETLGAVATFGAVLLSIQRLFTHPVVIKNTQESLHYTFLHGFVRMVHLLTEVNLSEFVTFHGLTHRNRLNNPVQHRQLEGADRFDYILDTIYLYLVFAWQTAMDIWSQTIDEETERNLRERVKSLKPELAGANYAEACSLVSNTVFPPLLREALVVNIPDFVNQTQLANFRLFINNKSNVPASVCPALPSDFIPLTYEESHPVLWAHVMLLRLAAFLLNHGQYVQAPDESSISLPLCDCNLCAPHRMPCYNPMLLNEILSIGKFEVRGPDTEGKGFSLTPQVFANAYMEKFYSEDFHPHQVVLYKDDKAQFKTEPTAAVIREPKLLALIRESQTRREKSILKRGGGRYLDPQTGEVLGESSHGIGEELQDGPSYGEKPSHDLPSYGKQNPVAGRGLQAAGERVRRDAGSPSQPTEQLGRRTPQRGGTGRDKRGRGRGGRSATPDPRQETAEKESLQGTRRESS.

The interval 178 to 232 is binding to host EIF4G; sequence LFDYLIGESQDPNDLDSEYKLAFTDEDLPQEGQAEKTKQRETLGAVATFGAVLLS. Positions 235-353 constitute an RRM domain; the sequence is RLFTHPVVIK…ELAGANYAEA (119 aa). Phosphotyrosine; by host occurs at positions 252 and 564. The interval 552 to 679 is disordered; it reads REKSILKRGG…SLQGTRRESS (128 aa). Residues 661-679 are compositionally biased toward basic and acidic residues; that stretch reads PRQETAEKESLQGTRRESS.

This sequence belongs to the adenoviridae shutoff protein family. In terms of assembly, monomer. Interacts with hexon protein; this interaction allows chaperoning and trimerization of hexon proteins. Interacts (via N-terminus) with host initiation factor EIF4G (via C-terminus). Interacts (via RRM domain) with viral mRNAs that contain the tripartite leader; this interaction allows ribosome shunting and expression of viral late mRNAs. Might be cleaved by the viral protease. Post-translationally, phosphorylated. Tyrosine phosphorylation enhances preferential binding to tripartite leader mRNAs and allows ribosome shunting. In terms of processing, methylated. Asymmetric dimethylation by host PRMT1 of the Arg/Gly-rich region may regulate shutoff protein binding to hexon and promote the capsid assembly in the nucleus.

The protein localises to the host cytoplasm. In terms of biological role, protein that inhibits host translation while promoting late viral translation by ribosome shunting. Blocks host cap-dependent translation by binding to eIF4G, displacing MKNK1 from cap initiation complexes and preventing EIF4E phosphorylation. Binds to the tripartite leader sequence of viral late mRNAs and recruits host eIF4G, PABPC1/poly-A binding protein and 40S ribosomes subunits on viral mRNAs, allowing ribosome shunting and efficient translation of late viral mRNAs even though conventional translation via ribosome scanning from the cap has been shut off in the host cell. During assembly, acts as a chaperone protein that helps hexon proteins assembly into trimers. This is Shutoff protein from Snake adenovirus serotype 1 (SnAdV-1).